Consider the following 522-residue polypeptide: Mediator of RNA polymerase II transcription subunit 1.2 (522 aa).

Positions 13–40 (LLEQRKNQELNIEHIDEEMRLEQVRQAA) form a coiled coil.

It belongs to the Mediator complex subunit 1 family. In terms of assembly, component of the Mediator complex.

The protein localises to the nucleus. Its function is as follows. Component of the Mediator complex, a coactivator involved in the regulated transcription of nearly all RNA polymerase II-dependent genes. Mediator functions as a bridge to convey information from gene-specific regulatory proteins to the basal RNA polymerase II transcription machinery. Mediator is recruited to promoters by direct interactions with regulatory proteins and serves as a scaffold for the assembly of a functional preinitiation complex with RNA polymerase II and the general transcription factors. The chain is Mediator of RNA polymerase II transcription subunit 1.2 (mdt-1.2) from Caenorhabditis elegans.